Reading from the N-terminus, the 81-residue chain is Cytochrome b559 subunit alpha (81 aa).

Residues 21–35 form a helical membrane-spanning segment; the sequence is VIHSITIPMLFIAGW. His23 serves as a coordination point for heme.

This sequence belongs to the PsbE/PsbF family. In terms of assembly, heterodimer of an alpha subunit and a beta subunit. PSII is composed of 1 copy each of membrane proteins PsbA, PsbB, PsbC, PsbD, PsbE, PsbF, PsbH, PsbI, PsbJ, PsbK, PsbL, PsbM, PsbT, PsbX, PsbY, PsbZ, Psb30/Ycf12, peripheral proteins PsbO, CyanoQ (PsbQ), PsbU, PsbV and a large number of cofactors. It forms dimeric complexes. It depends on heme b as a cofactor.

The protein localises to the cellular thylakoid membrane. Its function is as follows. This b-type cytochrome is tightly associated with the reaction center of photosystem II (PSII). PSII is a light-driven water:plastoquinone oxidoreductase that uses light energy to abstract electrons from H(2)O, generating O(2) and a proton gradient subsequently used for ATP formation. It consists of a core antenna complex that captures photons, and an electron transfer chain that converts photonic excitation into a charge separation. The chain is Cytochrome b559 subunit alpha from Rippkaea orientalis (strain PCC 8801 / RF-1) (Cyanothece sp. (strain PCC 8801)).